The following is a 230-amino-acid chain: Ureidoacrylate amidohydrolase RutB (230 aa).

The active-site Proton acceptor is the Asp-24. The active site involves Lys-133. The Nucleophile role is filled by Cys-166.

Belongs to the isochorismatase family. RutB subfamily.

It carries out the reaction (Z)-3-ureidoacrylate + H2O + H(+) = (Z)-3-aminoacrylate + NH4(+) + CO2. It catalyses the reaction (Z)-3-ureidoacrylate + H2O = (Z)-3-aminoacrylate + carbamate + H(+). The catalysed reaction is (Z)-2-methylureidoacrylate + H2O + H(+) = (Z)-2-methylaminoacrylate + NH4(+) + CO2. Hydrolyzes ureidoacrylate to form aminoacrylate and carbamate. The carbamate hydrolyzes spontaneously, thereby releasing one of the nitrogen atoms of the pyrimidine ring as ammonia and one of its carbon atoms as CO2. The chain is Ureidoacrylate amidohydrolase RutB from Escherichia coli O157:H7.